We begin with the raw amino-acid sequence, 144 residues long: Maximins 4/H3 type 1 (144 aa).

The signal sequence occupies residues 1 to 18; that stretch reads MNFKYIIAVSFFIASAYA. Residues 19–43 constitute a propeptide that is removed on maturation; that stretch reads RSEEKDVQSLSQRDVLEEESLREIR. Asn70 bears the Asparagine amide mark. Residues 74 to 123 constitute a propeptide that is removed on maturation; that stretch reads TAEDHEVMKRLEAVMRDLDSLDHPEEASERETRGFNQEEIANLFTKKEKR. An Isoleucine amide modification is found at Ile143.

The protein belongs to the bombinin family. In terms of tissue distribution, expressed by the skin glands.

Its subcellular location is the secreted. Its function is as follows. Maximin-4 shows antibacterial activity against both Gram-positive and Gram-negative bacteria. It also shows antimicrobial activity against the fungus C.albicans, but not against A.flavus nor P.uticale. It has little hemolytic activity. It does not possess a significant cytotoxicity against tumor cell lines. It does not possess a significant anti-HIV activity. Functionally, maximin-H3 shows antibacterial activity against both Gram-positive and Gram-negative bacteria. It also shows antimicrobial activity against the fungus C.albicans. Shows strong hemolytic activity. This is Maximins 4/H3 type 1 from Bombina maxima (Giant fire-bellied toad).